Reading from the N-terminus, the 433-residue chain is GASFSLHVLSKINSYKSQSTKPIRGVASMAKKSVGDLTSADLKGKKVFVRADLNVPLDDSQNITDDTRIRAAIPTIKHLINNGAKVILSSHLGRPKGVTPKFSLAPLVPRLSELLGLQVVKADDCIGPDVEKLVAELPEGGVLLLENVRFYKEEEKNDPEFAKKLASLADLYVNDAFGTAHRAHASTEGVTKFLKPSVAGFLLQKELDYLVGAVSNPKRPFAAIVGGSKVSSKIGVIESLLEKCDILLLGGGMIFTFYKAQGMSVGSSLVEEDKLDLATSLLAKAKEKGVSLLLPTDVVIADKFAADADSKIVPASGIPDGWMGLDIGPDSIKTFSEALDTTQTVIWNGPMGVFEFEKFAAGTEAIAKKLEEISKKGATTIIGGGDSVAAVEKVGVAEAMSHISTGGGASLELLEGKQLPGVLALNEADPVPV.

The N-terminal 28 residues, 1-28 (GASFSLHVLSKINSYKSQSTKPIRGVAS), are a transit peptide targeting the chloroplast. (2R)-3-phosphoglycerate contacts are provided by A51, D52, N54, R68, S90, H91, G93, R94, R149, H181, and R182. G227 provides a ligand contact to ADP. G227 is a binding site for CDP. The AMP site is built by K229 and K233. K233 lines the ATP pocket. G251 contacts ADP. G251 contacts CDP. AMP contacts are provided by G252 and G324. The ATP site is built by G252 and G324. Residues G349 and F354 each coordinate CDP. Residue F354 coordinates ADP. Position 355 (E355) interacts with AMP. Residues E355, D386, and S387 each contribute to the ATP site. Residue D386 coordinates Mg(2+).

This sequence belongs to the phosphoglycerate kinase family. In terms of assembly, monomer. The cofactor is Mg(2+).

The protein localises to the plastid. It localises to the chloroplast. The enzyme catalyses (2R)-3-phosphoglycerate + ATP = (2R)-3-phospho-glyceroyl phosphate + ADP. It functions in the pathway carbohydrate biosynthesis; Calvin cycle. The sequence is that of Phosphoglycerate kinase, chloroplastic from Spinacia oleracea (Spinach).